Consider the following 594-residue polypeptide: Sucrose transport protein SUC3 (594 aa).

N-acetylserine is present on serine 2. Residues 2 to 58 are Cytoplasmic-facing; that stretch reads SDSVSISVPYRNLRKEIELETVTKHRQNESGSSSFSESASPSNHSDSADGESVSKNC. The segment at 23 to 50 is disordered; it reads VTKHRQNESGSSSFSESASPSNHSDSAD. The span at 31–46 shows a compositional bias: low complexity; the sequence is SGSSSFSESASPSNHS. A helical transmembrane segment spans residues 59 to 79; sequence SLVTLVLSCTVAAGVQFGWAL. At 80–98 the chain is on the extracellular side; sequence QLSLLTPYIQTLGISHAFS. The chain crosses the membrane as a helical span at residues 99–119; that stretch reads SFIWLCGPITGLVVQPFVGIW. Residues 120–131 lie on the Cytoplasmic side of the membrane; sequence SDKCTSKYGRRR. The helical transmembrane segment at 132-152 threads the bilayer; that stretch reads PFILVGSFMISIAVIIIGFSA. Topologically, residues 153-174 are extracellular; that stretch reads DIGYLLGDSKEHCSTFKGTRTR. A helical membrane pass occupies residues 175–195; that stretch reads AAVVFIIGFWLLDLANNTVQG. The Cytoplasmic portion of the chain corresponds to 196 to 214; it reads PARALLADLSGPDQRNTAN. The chain crosses the membrane as a helical span at residues 215–235; sequence AVFCLWMAIGNILGFSAGASG. Topologically, residues 236–257 are extracellular; it reads KWQEWFPFLTSRACCAACGNLK. The helical transmembrane segment at 258–278 threads the bilayer; sequence AAFLLAVVFLTICTLVTIYFA. The Cytoplasmic segment spans residues 279 to 365; that stretch reads KEIPFTSNKP…LTSLRHLPPA (87 aa). A helical membrane pass occupies residues 366–386; it reads MHSVLIVMALTWLSWFPFFLF. Residues 387-417 are Extracellular-facing; it reads DTDWMGREVYHGDPTGDSLHMELYDQGVREG. Residues 418-438 form a helical membrane-spanning segment; the sequence is ALGLLLNSVVLGISSFLIEPM. The Cytoplasmic portion of the chain corresponds to 439–445; the sequence is CQRMGAR. A helical membrane pass occupies residues 446–466; it reads VVWALSNFTVFACMAGTAVIS. Over 467–489 the chain is Extracellular; it reads LMSLSDDKNGIEYIMRGNETTRT. Residue asparagine 484 is glycosylated (N-linked (GlcNAc...) asparagine). A helical membrane pass occupies residues 490 to 510; the sequence is AAVIVFALLGFPLAITYSVPF. Over 511–525 the chain is Cytoplasmic; it reads SVTAEVTADSGGGQG. The helical transmembrane segment at 526 to 546 threads the bilayer; sequence LAIGVLNLAIVIPQMIVSLGA. The Extracellular segment spans residues 547 to 555; the sequence is GPWDQLFGG. A helical transmembrane segment spans residues 556 to 576; the sequence is GNLPAFVLASVAAFAAGVIAL. Residues 577 to 594 lie on the Cytoplasmic side of the membrane; the sequence is QRLPTLSSSFKSTGFHIG.

Belongs to the glycoside-pentoside-hexuronide (GPH) cation symporter transporter (TC 2.A.2.4) family. Homodimer. Interacts with SUC2 and SUC4. As to expression, mostly localized in parenchymatic cells next to vascular tissues (at protein level). Present in stipules, trichomes, hydathodes and guard cells of source leaves, as well as in lateral root tips and flowers.

The protein localises to the cell membrane. It catalyses the reaction sucrose(out) + H(+)(out) = sucrose(in) + H(+)(in). It functions in the pathway glycan biosynthesis; sucrose metabolism. Inhibited by protonophores (e.g. dinitrophenol and carbonyl cyanide m-chlorophenyl-hydrazone (CCCP)) and SH group inhibitors (e.g. p-chloromercuribenzene sulphonic acid (PCMBS)). Functionally, responsible for the transport of sucrose into the cell, with the concomitant uptake of protons (symport system). Can also transport maltose at a lesser rate. May also transport biotin. Probably involved in carpel maturation that leads to pod shatter and seed dispersal. This chain is Sucrose transport protein SUC3, found in Arabidopsis thaliana (Mouse-ear cress).